Consider the following 197-residue polypeptide: MTALILLLAYLLGSIPFGLLVGKIGYGIDIREHGSGNLGGTNTFRVLGAKAGTIVIVGDMLKGTLAASLPMLFSVPVHPLLAGAIAVVGHMYPVFAKFRGGKAVATSGGVMLFYSPLFFLSLIAVFLVVLAVSRYVSLSSMAAALYAVVYTVFFTDDIPLTVAVLLLASFIFYRHRANIQRILNKTEPKVKWPGKRS.

Helical transmembrane passes span 1–21, 69–89, 110–130, and 152–172; these read MTALILLLAYLLGSIPFGLLV, LPMLFSVPVHPLLAGAIAVVG, VMLFYSPLFFLSLIAVFLVVL, and VFFTDDIPLTVAVLLLASFIF.

Belongs to the PlsY family. As to quaternary structure, probably interacts with PlsX.

Its subcellular location is the cell membrane. The enzyme catalyses an acyl phosphate + sn-glycerol 3-phosphate = a 1-acyl-sn-glycero-3-phosphate + phosphate. It functions in the pathway lipid metabolism; phospholipid metabolism. Functionally, catalyzes the transfer of an acyl group from acyl-phosphate (acyl-PO(4)) to glycerol-3-phosphate (G3P) to form lysophosphatidic acid (LPA). This enzyme utilizes acyl-phosphate as fatty acyl donor, but not acyl-CoA or acyl-ACP. The protein is Glycerol-3-phosphate acyltransferase of Geobacillus kaustophilus (strain HTA426).